The primary structure comprises 131 residues: Large ribosomal subunit protein bL19 (131 aa).

Positions 110–131 are disordered; it reads KSARIAERTDDRAKKAKATAAE. Over residues 113–122 the composition is skewed to basic and acidic residues; sequence RIAERTDDRA.

It belongs to the bacterial ribosomal protein bL19 family.

This protein is located at the 30S-50S ribosomal subunit interface and may play a role in the structure and function of the aminoacyl-tRNA binding site. In Azorhizobium caulinodans (strain ATCC 43989 / DSM 5975 / JCM 20966 / LMG 6465 / NBRC 14845 / NCIMB 13405 / ORS 571), this protein is Large ribosomal subunit protein bL19.